Reading from the N-terminus, the 186-residue chain is Folate transporter FolT (186 aa).

5 consecutive transmembrane segments (helical) span residues 16–36 (VTLA…IPII), 47–67 (IVNV…SLAI), 81–101 (FIIW…LFFY), 116–136 (VTIA…PLLV), and 153–173 (WLKI…MPQL).

Forms a stable energy-coupling factor (ECF) transporter complex composed of a membrane-embedded substrate-binding protein (S component), two ATP-binding proteins (A components) and a transmembrane protein (T component).

Its subcellular location is the cell membrane. In terms of biological role, folate-binding protein that interacts with the energy-coupling factor (ECF) ABC-transporter complex. Unlike classic ABC transporters this ECF transporter provides the energy necessary to transport a number of different substrates. The substrates themselves are bound by transmembrane, not extracytoplasmic soluble proteins. In Streptococcus mutans serotype c (strain ATCC 700610 / UA159), this protein is Folate transporter FolT (folT).